A 169-amino-acid polypeptide reads, in one-letter code: UPF0303 protein Oant_1766 (169 aa).

This sequence belongs to the UPF0303 family.

In Brucella anthropi (strain ATCC 49188 / DSM 6882 / CCUG 24695 / JCM 21032 / LMG 3331 / NBRC 15819 / NCTC 12168 / Alc 37) (Ochrobactrum anthropi), this protein is UPF0303 protein Oant_1766.